The following is a 351-amino-acid chain: Signal recognition particle receptor FtsY (351 aa).

GTP is bound by residues 156–163 (GINGTGKT), 238–242 (DTAGR), and 302–305 (TKLD).

It belongs to the GTP-binding SRP family. FtsY subfamily. Part of the signal recognition particle protein translocation system, which is composed of SRP and FtsY. SRP is a ribonucleoprotein composed of Ffh and a 4.5S RNA molecule.

The protein localises to the cell membrane. It localises to the cytoplasm. The enzyme catalyses GTP + H2O = GDP + phosphate + H(+). Functionally, involved in targeting and insertion of nascent membrane proteins into the cytoplasmic membrane. Acts as a receptor for the complex formed by the signal recognition particle (SRP) and the ribosome-nascent chain (RNC). Interaction with SRP-RNC leads to the transfer of the RNC complex to the Sec translocase for insertion into the membrane, the hydrolysis of GTP by both Ffh and FtsY, and the dissociation of the SRP-FtsY complex into the individual components. This chain is Signal recognition particle receptor FtsY, found in Buchnera aphidicola subsp. Schizaphis graminum (strain Sg).